A 66-amino-acid polypeptide reads, in one-letter code: Photosystem II reaction center protein H (66 aa).

The chain crosses the membrane as a helical span at residues 27 to 47; it reads GAVPVMTVIGLLLLVFLVILL.

The protein belongs to the PsbH family. In terms of assembly, PSII is composed of 1 copy each of membrane proteins PsbA, PsbB, PsbC, PsbD, PsbE, PsbF, PsbH, PsbI, PsbJ, PsbK, PsbL, PsbM, PsbT, PsbX, PsbY, Psb30/Ycf12, peripheral proteins PsbO, CyanoQ (PsbQ), PsbU, PsbV and a large number of cofactors. It forms dimeric complexes.

It localises to the cellular thylakoid membrane. Functionally, one of the components of the core complex of photosystem II (PSII), required for its stability and/or assembly. PSII is a light-driven water:plastoquinone oxidoreductase that uses light energy to abstract electrons from H(2)O, generating O(2) and a proton gradient subsequently used for ATP formation. It consists of a core antenna complex that captures photons, and an electron transfer chain that converts photonic excitation into a charge separation. The polypeptide is Photosystem II reaction center protein H (Prochlorococcus marinus (strain MIT 9215)).